The sequence spans 436 residues: Arginine biosynthesis bifunctional protein ArgJ, mitochondrial (436 aa).

Positions 172, 198, 209, 298, 431, and 436 each coordinate substrate. Thr-209 serves as the catalytic Nucleophile.

This sequence belongs to the ArgJ family. Heterodimer of an alpha and a beta chain. Post-translationally, the alpha and beta chains are autoproteolytically processed from a single precursor protein within the mitochondrion.

The protein resides in the mitochondrion matrix. It catalyses the reaction N(2)-acetyl-L-ornithine + L-glutamate = N-acetyl-L-glutamate + L-ornithine. The catalysed reaction is L-glutamate + acetyl-CoA = N-acetyl-L-glutamate + CoA + H(+). It functions in the pathway amino-acid biosynthesis; L-arginine biosynthesis; L-ornithine and N-acetyl-L-glutamate from L-glutamate and N(2)-acetyl-L-ornithine (cyclic): step 1/1. Its pathway is amino-acid biosynthesis; L-arginine biosynthesis; N(2)-acetyl-L-ornithine from L-glutamate: step 1/4. Its function is as follows. Catalyzes two activities which are involved in the cyclic version of arginine biosynthesis: the synthesis of acetylglutamate from glutamate and acetyl-CoA, and of ornithine by transacetylation between acetylornithine and glutamate. The protein is Arginine biosynthesis bifunctional protein ArgJ, mitochondrial of Meyerozyma guilliermondii (strain ATCC 6260 / CBS 566 / DSM 6381 / JCM 1539 / NBRC 10279 / NRRL Y-324) (Yeast).